Reading from the N-terminus, the 121-residue chain is NADH-ubiquinone oxidoreductase chain 3 (121 aa).

The next 3 membrane-spanning stretches (helical) occupy residues 11–31 (ILTF…LSYF), 63–83 (FYLV…LFPW), and 90–110 (LSIF…LGFI).

Belongs to the complex I subunit 3 family.

The protein localises to the mitochondrion membrane. The catalysed reaction is a ubiquinone + NADH + 5 H(+)(in) = a ubiquinol + NAD(+) + 4 H(+)(out). Core subunit of the mitochondrial membrane respiratory chain NADH dehydrogenase (Complex I) that is believed to belong to the minimal assembly required for catalysis. Complex I functions in the transfer of electrons from NADH to the respiratory chain. The immediate electron acceptor for the enzyme is believed to be ubiquinone. The sequence is that of NADH-ubiquinone oxidoreductase chain 3 (NAD3) from Porphyra purpurea (Red seaweed).